The primary structure comprises 139 residues: MGSNSLSMIKVRLQNLFDNDEVALLKITCYTDKLIHLTNALAKAVIHTIKLNGIVFVHVITSSDICPNNNIVVKSNFTTMPALQNGGYIWEMMELTHCSQPNGLIDDNCEIKFSKKLSDSTMTNYMNQLSELLGFDLNP.

Positions 136 to 139 (DLNP) match the DLNP; interaction with MAP1B motif.

Belongs to the pneumovirus non-structural protein 1 family. In terms of assembly, monomer. Homomultimer. Heteromultimer with NS2. Interacts with the matrix protein M. Interacts with host ELOC and CUL2; this interaction allows NS1 to form an active E3 ligase with ELOC and CUL2. Interacts with host IRF3; this interaction leads to the disrupted association of IRF3 with CREBBP and thus reduced binding of IRF3 to the IFN-beta promoter. Interacts with host MAVS; this interaction prevents MAVS binding to RIGI and inhibits signaling pathway leading to interferon production. Interacts with host MAP1B/microtubule-associated protein 1B. Interacts with host TRIM25 (via SPRY domain); this interaction suppresses RIGI ubiquitination and results in decreased interaction between RIGI and MAVS.

It localises to the host cytoplasm. Its subcellular location is the host mitochondrion. The protein resides in the host nucleus. Plays a major role in antagonizing the type I IFN-mediated antiviral response by degrading or inhibiting multiple cellular factors required for either IFN induction or response pathways. Acts cooperatively with NS2 to repress activation and nuclear translocation of host IFN-regulatory factor IRF3. Also disrupts the association of IRF3 with CREBBP. Interacts with host mitochondrial-associated membrane (MAM) MAVS and prevents the interaction with RIGI. Interacts with TRIM25 to suppress TRIM25-mediated RIGI ubiquitination and thereby RIGI-MAVS interaction. Together with NS2, participates in the proteasomal degradation of host STAT2, IRF3, IRF7, TBK1 and RIGI through a NS-degradasome involving CUL2 and Elongin-C. The degradasome requires an intact mitochondrial MAVS. Decreases the levels of host TRAF3 and IKBKE/IKK-epsilon. As functions other than disruptions of the type I IFN-mediated antiviral signaling pathways, induces host SOCS1 and SOCS3 expression. Suppresses premature apoptosis by an NF-kappa-B-dependent, interferon-independent mechanism and thus facilitates virus growth. Additionally, NS1 may serve some inhibitory role in viral transcription and RNA replication. Suppresses proliferation and activation of host CD103+ CD8+ cytotoxic T-lymphocytes and Th17 helper T-lymphocytes. This Homo sapiens (Human) protein is Non-structural protein 1 (1C).